Consider the following 104-residue polypeptide: Naphthalene 1,2-dioxygenase/salicylate 5-hydroxylase systems, ferredoxin component (104 aa).

One can recognise a Rieske domain in the interval 6–101 (IDAACLDDIP…VKIENMRVML (96 aa)). [2Fe-2S] cluster contacts are provided by cysteine 45, histidine 47, cysteine 64, and histidine 67.

The protein belongs to the bacterial ring-hydroxylating dioxygenase ferredoxin component family. In terms of assembly, ferredoxin NagAb belongs to both the salicylate 5-hydroxylase (S5H) and the naphthalene 1,2-dioxygenase (NDO) multicomponent enzyme systems. The NDO multicomponent enzyme system is composed of an electron transfer component and a dioxygenase component (iron sulfur protein (ISP)). The electron transfer component is composed of a ferredoxin reductase (NagAa) and a ferredoxin (NagAb), and the dioxygenase component is formed by a large alpha subunit (NagAc) and a small beta subunit (NagAd). The S5H multicomponent enzyme system is composed of an electron transfer component and a monooxygenase component. The electron transfer component is composed of a ferredoxin reductase (NagAa) and a ferredoxin (NagAb), and the monooxygenase component is formed by a large subunit (NagG) and a small subunit (NagH). [2Fe-2S] cluster is required as a cofactor.

It functions in the pathway aromatic compound metabolism; naphthalene degradation. Functionally, component of two multicomponent enzyme systems which are involved in the catabolism of naphthalene. Plays a role as an electron transfer component for both salicylate 5-hydroxylase (S5H) and naphthalene 1,2-dioxygenase (NDO) systems, by transferring electrons to the oxygenase components. The polypeptide is Naphthalene 1,2-dioxygenase/salicylate 5-hydroxylase systems, ferredoxin component (Ralstonia sp).